Here is a 257-residue protein sequence, read N- to C-terminus: Probable amino-acid ABC transporter ATP-binding protein y4tH (257 aa).

An ABC transporter domain is found at 6 to 251; it reads IVFDKVKKAY…PKEERTREFL (246 aa). Residue 38–45 participates in ATP binding; sequence GPSGSGKS.

Belongs to the ABC transporter superfamily.

It localises to the cell inner membrane. Probably part of a binding-protein-dependent transport system y4tEFGH for an amino acid. Probably responsible for energy coupling to the transport system. This chain is Probable amino-acid ABC transporter ATP-binding protein y4tH, found in Sinorhizobium fredii (strain NBRC 101917 / NGR234).